Consider the following 376-residue polypeptide: Alanine racemase (376 aa).

The active-site Proton acceptor; specific for D-alanine is the lysine 40. Lysine 40 carries the post-translational modification N6-(pyridoxal phosphate)lysine. Arginine 138 serves as a coordination point for substrate. The active-site Proton acceptor; specific for L-alanine is tyrosine 270. Position 317 (methionine 317) interacts with substrate.

This sequence belongs to the alanine racemase family. Pyridoxal 5'-phosphate serves as cofactor.

It catalyses the reaction L-alanine = D-alanine. Its pathway is amino-acid biosynthesis; D-alanine biosynthesis; D-alanine from L-alanine: step 1/1. Functionally, catalyzes the interconversion of L-alanine and D-alanine. May also act on other amino acids. The protein is Alanine racemase (alr) of Lactobacillus gasseri (strain ATCC 33323 / DSM 20243 / BCRC 14619 / CIP 102991 / JCM 1131 / KCTC 3163 / NCIMB 11718 / NCTC 13722 / AM63).